The chain runs to 155 residues: Regulatory protein RecX (155 aa).

The protein belongs to the RecX family.

It is found in the cytoplasm. Functionally, modulates RecA activity. The polypeptide is Regulatory protein RecX (Vibrio parahaemolyticus serotype O3:K6 (strain RIMD 2210633)).